Consider the following 57-residue polypeptide: Granulin-2 (57 aa).

Disulfide bonds link C4/C16 and C10/C26.

This sequence belongs to the granulin family. Granulins are disulfide bridged. In terms of tissue distribution, ubiquitous.

It is found in the secreted. Its function is as follows. Granulins have possible cytokine-like activity. They may play a role in inflammation, wound repair, and tissue remodeling. This chain is Granulin-2, found in Cyprinus carpio (Common carp).